Consider the following 733-residue polypeptide: Photosystem I P700 chlorophyll a apoprotein A2 (733 aa).

The next 8 helical transmembrane spans lie at Ile-46–Ala-69, Leu-134–Gln-157, Leu-174–Ile-198, Met-272–Tyr-290, Leu-329–Tyr-352, Ala-368–Val-394, Ala-416–His-438, and Phe-516–Val-534. [4Fe-4S] cluster-binding residues include Cys-558 and Cys-567. 2 consecutive transmembrane segments (helical) span residues Ala-574–Trp-595 and Leu-642–Ile-664. Residues His-653, Met-661, and Tyr-669 each coordinate chlorophyll a. Trp-670 is a phylloquinone binding site. The helical transmembrane segment at Leu-706 to Ala-726 threads the bilayer.

Belongs to the PsaA/PsaB family. As to quaternary structure, the PsaA/B heterodimer binds the P700 chlorophyll special pair and subsequent electron acceptors. PSI consists of a core antenna complex that captures photons, and an electron transfer chain that converts photonic excitation into a charge separation. The eukaryotic PSI reaction center is composed of at least 11 subunits. Requires P700 is a chlorophyll a/chlorophyll a' dimer, A0 is one or more chlorophyll a, A1 is one or both phylloquinones and FX is a shared 4Fe-4S iron-sulfur center. as cofactor.

The protein localises to the plastid. It localises to the chloroplast thylakoid membrane. The catalysed reaction is reduced [plastocyanin] + hnu + oxidized [2Fe-2S]-[ferredoxin] = oxidized [plastocyanin] + reduced [2Fe-2S]-[ferredoxin]. Its function is as follows. PsaA and PsaB bind P700, the primary electron donor of photosystem I (PSI), as well as the electron acceptors A0, A1 and FX. PSI is a plastocyanin/cytochrome c6-ferredoxin oxidoreductase, converting photonic excitation into a charge separation, which transfers an electron from the donor P700 chlorophyll pair to the spectroscopically characterized acceptors A0, A1, FX, FA and FB in turn. Oxidized P700 is reduced on the lumenal side of the thylakoid membrane by plastocyanin or cytochrome c6. The polypeptide is Photosystem I P700 chlorophyll a apoprotein A2 (Thalassiosira pseudonana (Marine diatom)).